The sequence spans 148 residues: UPF0756 membrane protein YeaL (148 aa).

Transmembrane regions (helical) follow at residues 14–34 (ALGF…LIIV), 51–71 (LSIG…SGTL), 86–106 (LVAI…VTLM), and 121–141 (VLGV…AGLV).

The protein belongs to the UPF0756 family.

It is found in the cell membrane. The sequence is that of UPF0756 membrane protein YeaL from Shigella dysenteriae serotype 1 (strain Sd197).